Here is a 750-residue protein sequence, read N- to C-terminus: ABC transporter D family member 3 (750 aa).

Residues 1-14 are compositionally biased toward polar residues; the sequence is MKKNNVNNITETLN. The tract at residues 1–32 is disordered; the sequence is MKKNNVNNITETLNSSSSSSSSSGSSSDEEVK. Residues 15–26 are compositionally biased toward low complexity; the sequence is SSSSSSSSSGSS. 4 consecutive transmembrane segments (helical) span residues 63 to 83, 123 to 143, 188 to 208, and 215 to 235; these read IVII…LLFG, FAIG…SIMA, FTTL…VVVY, and TTID…GYFI. The ABC transmembrane type-1 domain maps to 74-362; sequence PLLLFLLLFG…EQAKQQFEAL (289 aa). Residues 334 to 370 adopt a coiled-coil conformation; it reads ALLKRSNKNIKNEELLVEEEQAKQQFEALLKNKKRVI. Residues 382-402 form a helical membrane-spanning segment; sequence MFTFFSPLINYFIISIPVFFL. One can recognise an ABC transporter domain in the interval 507 to 737; it reads ITLDDVTYFT…SNNINTINID (231 aa). An ATP-binding site is contributed by 540–547; the sequence is GPSGSGKS.

This sequence belongs to the ABC transporter superfamily. ABCD family. Peroxisomal fatty acyl CoA transporter (TC 3.A.1.203) subfamily.

The protein resides in the membrane. The chain is ABC transporter D family member 3 (abcD3) from Dictyostelium discoideum (Social amoeba).